A 561-amino-acid chain; its full sequence is Dihydroxy-acid dehydratase (561 aa).

Cys50 is a [2Fe-2S] cluster binding site. Asp82 contacts Mg(2+). Residue Cys123 coordinates [2Fe-2S] cluster. Mg(2+)-binding residues include Asp124 and Lys125. At Lys125 the chain carries N6-carboxylysine. Residue Cys195 participates in [2Fe-2S] cluster binding. Glu447 is a binding site for Mg(2+). Ser473 functions as the Proton acceptor in the catalytic mechanism.

Belongs to the IlvD/Edd family. In terms of assembly, homodimer. The cofactor is [2Fe-2S] cluster. Mg(2+) is required as a cofactor.

It catalyses the reaction (2R)-2,3-dihydroxy-3-methylbutanoate = 3-methyl-2-oxobutanoate + H2O. The enzyme catalyses (2R,3R)-2,3-dihydroxy-3-methylpentanoate = (S)-3-methyl-2-oxopentanoate + H2O. It participates in amino-acid biosynthesis; L-isoleucine biosynthesis; L-isoleucine from 2-oxobutanoate: step 3/4. It functions in the pathway amino-acid biosynthesis; L-valine biosynthesis; L-valine from pyruvate: step 3/4. In terms of biological role, functions in the biosynthesis of branched-chain amino acids. Catalyzes the dehydration of (2R,3R)-2,3-dihydroxy-3-methylpentanoate (2,3-dihydroxy-3-methylvalerate) into 2-oxo-3-methylpentanoate (2-oxo-3-methylvalerate) and of (2R)-2,3-dihydroxy-3-methylbutanoate (2,3-dihydroxyisovalerate) into 2-oxo-3-methylbutanoate (2-oxoisovalerate), the penultimate precursor to L-isoleucine and L-valine, respectively. The sequence is that of Dihydroxy-acid dehydratase from Acaryochloris marina (strain MBIC 11017).